A 634-amino-acid polypeptide reads, in one-letter code: MAKHHPLTDWLPTSKKEMEAKGWDEADVILFSGDAYVDHPSFGAAVVGRILEAEGLRVAIVPQPNWRDDLRDFRKLGRPRLFFGVSAGAMDSMVNKYTANRRLRSEDAYTPDRRSDMRPDYPTIVYTRILKELFPDVPVIVGGIEASLRRLTHYDYWQDKLLPGILYQSGADLLIYGMGELPLHEIAQRLIAGEPFDSLKSIRQIAYLVPKGKTPVPCENDRHLFSHEECLSDKRKQAQNFREIEIQSNRYEADRILQAVGDSTIVVNPPFPPMSTAQIDQSFDLPYTRLPHPRYKGKIISAYEMIKHSVNVHRGCFGGCAFCTISAHQGKFIASRSEASVLREVKEITEMEDFKGYLSDVGGPSANMYKMQGYDLSICKRCKKPSCIHPNVCPNLNADHRPLLDLLRRIDKNPKIKKSFIGSGVRMDLLLHNYKDKVLKKAADEYTEDLIVKHVSGRLKVAPEHSSDRVLNLMRKPPFRQFAEFTKRFQRINEAHGLRQQLIPYFISSHPGCTEEDMAELAILTKKLDFKLEQIQDFTPTPMTLATEMYYTGYHPYTLQPVYTAIKKEEKMRQHMFFFWYKREEADKIRRELHRIGRPDLIAKLFDRTTSSRNDRHTPPSTQPRKSKSKSRHS.

The region spanning 302–582 (AYEMIKHSVN…RQHMFFFWYK (281 aa)) is the Radical SAM core domain. [4Fe-4S] cluster contacts are provided by C316, C320, and C323. The interval 607-634 (DRTTSSRNDRHTPPSTQPRKSKSKSRHS) is disordered. Over residues 625 to 634 (RKSKSKSRHS) the composition is skewed to basic residues.

Belongs to the UPF0313 family. It depends on [4Fe-4S] cluster as a cofactor.

In Porphyromonas gingivalis (strain ATCC BAA-308 / W83), this protein is UPF0313 protein PG_0934.